The chain runs to 512 residues: ETS translocation variant 3 (512 aa).

A DNA-binding region (ETS) is located at residues 35–116; the sequence is IQLWHFILEL…KGKRFTYKFN (82 aa). The tract at residues 136–222 is disordered; it reads VPQSAPPVPT…NAIGGGGIGH (87 aa). 3 positions are modified to phosphoserine: Ser-139, Ser-159, and Ser-315. A compositionally biased stretch (polar residues) spans 158–184; sequence HSPTNDVQPGRFSASSLTASGQESSNG. Positions 336–512 are disordered; that stretch reads PEESTQFSIK…QGLATAAADA (177 aa). The segment covering 380-406 has biased composition (basic and acidic residues); sequence IKVEPASEKDPESLRQSAREKEEHTQE. Lys-381 is covalently cross-linked (Glycyl lysine isopeptide (Lys-Gly) (interchain with G-Cter in SUMO2)). Lys-388 is modified (N6-acetyllysine; alternate). Residue Lys-388 forms a Glycyl lysine isopeptide (Lys-Gly) (interchain with G-Cter in SUMO2); alternate linkage. Residues 443 to 452 show a composition bias toward acidic residues; sequence EPLEVTEDIE. Composition is skewed to basic and acidic residues over residues 453–468 and 479–491; these read DRPG…KEDA and RWND…ELSK.

The protein belongs to the ETS family.

It is found in the nucleus. Its function is as follows. Transcriptional repressor that contribute to growth arrest during terminal macrophage differentiation by repressing target genes involved in Ras-dependent proliferation. Represses MMP1 promoter activity. This Pan troglodytes (Chimpanzee) protein is ETS translocation variant 3 (ETV3).